The following is a 126-amino-acid chain: Small ribosomal subunit protein bS6 (126 aa).

The protein belongs to the bacterial ribosomal protein bS6 family.

In terms of biological role, binds together with bS18 to 16S ribosomal RNA. The protein is Small ribosomal subunit protein bS6 of Actinobacillus succinogenes (strain ATCC 55618 / DSM 22257 / CCUG 43843 / 130Z).